The chain runs to 257 residues: Imidazole glycerol phosphate synthase subunit HisF (257 aa).

Catalysis depends on residues Asp-11 and Asp-130.

The protein belongs to the HisA/HisF family. In terms of assembly, heterodimer of HisH and HisF.

The protein localises to the cytoplasm. The catalysed reaction is 5-[(5-phospho-1-deoxy-D-ribulos-1-ylimino)methylamino]-1-(5-phospho-beta-D-ribosyl)imidazole-4-carboxamide + L-glutamine = D-erythro-1-(imidazol-4-yl)glycerol 3-phosphate + 5-amino-1-(5-phospho-beta-D-ribosyl)imidazole-4-carboxamide + L-glutamate + H(+). The protein operates within amino-acid biosynthesis; L-histidine biosynthesis; L-histidine from 5-phospho-alpha-D-ribose 1-diphosphate: step 5/9. IGPS catalyzes the conversion of PRFAR and glutamine to IGP, AICAR and glutamate. The HisF subunit catalyzes the cyclization activity that produces IGP and AICAR from PRFAR using the ammonia provided by the HisH subunit. This chain is Imidazole glycerol phosphate synthase subunit HisF, found in Shewanella piezotolerans (strain WP3 / JCM 13877).